The primary structure comprises 425 residues: Serine--tRNA ligase (425 aa).

L-serine is bound at residue 230-232; sequence TAE. Position 261–263 (261–263) interacts with ATP; it reads RSE. Position 284 (E284) interacts with L-serine. 348–351 is a binding site for ATP; that stretch reads EISS. S384 is an L-serine binding site.

This sequence belongs to the class-II aminoacyl-tRNA synthetase family. Type-1 seryl-tRNA synthetase subfamily. As to quaternary structure, homodimer. The tRNA molecule binds across the dimer.

The protein localises to the cytoplasm. It carries out the reaction tRNA(Ser) + L-serine + ATP = L-seryl-tRNA(Ser) + AMP + diphosphate + H(+). The catalysed reaction is tRNA(Sec) + L-serine + ATP = L-seryl-tRNA(Sec) + AMP + diphosphate + H(+). The protein operates within aminoacyl-tRNA biosynthesis; selenocysteinyl-tRNA(Sec) biosynthesis; L-seryl-tRNA(Sec) from L-serine and tRNA(Sec): step 1/1. Catalyzes the attachment of serine to tRNA(Ser). Is also able to aminoacylate tRNA(Sec) with serine, to form the misacylated tRNA L-seryl-tRNA(Sec), which will be further converted into selenocysteinyl-tRNA(Sec). The sequence is that of Serine--tRNA ligase from Streptococcus agalactiae serotype Ia (strain ATCC 27591 / A909 / CDC SS700).